An 841-amino-acid chain; its full sequence is Translation initiation factor IF-2 (841 aa).

The region spanning 341–508 (NRAPVVTIMG…AILLQAEILE (168 aa)) is the tr-type G domain. Residues 350-357 (GHVDHGKT) are G1. 350 to 357 (GHVDHGKT) contributes to the GTP binding site. Residues 375–379 (GITQC) form a G2 region. Positions 396–399 (DTPG) are G3. GTP-binding positions include 396 to 400 (DTPGH) and 450 to 453 (NKID). The G4 stretch occupies residues 450-453 (NKID). A G5 region spans residues 486 to 488 (SAK).

The protein belongs to the TRAFAC class translation factor GTPase superfamily. Classic translation factor GTPase family. IF-2 subfamily.

It is found in the cytoplasm. One of the essential components for the initiation of protein synthesis. Protects formylmethionyl-tRNA from spontaneous hydrolysis and promotes its binding to the 30S ribosomal subunits. Also involved in the hydrolysis of GTP during the formation of the 70S ribosomal complex. The protein is Translation initiation factor IF-2 of Wigglesworthia glossinidia brevipalpis.